Reading from the N-terminus, the 500-residue chain is Aspartyl/glutamyl-tRNA(Asn/Gln) amidotransferase subunit B (500 aa).

Belongs to the GatB/GatE family. GatB subfamily. Heterotrimer of A, B and C subunits.

It carries out the reaction L-glutamyl-tRNA(Gln) + L-glutamine + ATP + H2O = L-glutaminyl-tRNA(Gln) + L-glutamate + ADP + phosphate + H(+). The catalysed reaction is L-aspartyl-tRNA(Asn) + L-glutamine + ATP + H2O = L-asparaginyl-tRNA(Asn) + L-glutamate + ADP + phosphate + 2 H(+). Functionally, allows the formation of correctly charged Asn-tRNA(Asn) or Gln-tRNA(Gln) through the transamidation of misacylated Asp-tRNA(Asn) or Glu-tRNA(Gln) in organisms which lack either or both of asparaginyl-tRNA or glutaminyl-tRNA synthetases. The reaction takes place in the presence of glutamine and ATP through an activated phospho-Asp-tRNA(Asn) or phospho-Glu-tRNA(Gln). The polypeptide is Aspartyl/glutamyl-tRNA(Asn/Gln) amidotransferase subunit B (Sinorhizobium fredii (strain NBRC 101917 / NGR234)).